We begin with the raw amino-acid sequence, 141 residues long: Phage-like element PBSX protein XkdS (141 aa).

The protein to B.subtilis YqbS.

In Bacillus subtilis (strain 168), this protein is Phage-like element PBSX protein XkdS (xkdS).